The sequence spans 241 residues: Glycerol-3-phosphate acyltransferase (241 aa).

6 helical membrane passes run Ile-3 to Ser-23, Ile-63 to Val-83, Tyr-97 to Tyr-117, Leu-131 to Val-151, Ile-156 to Trp-176, and Leu-198 to Val-218.

It belongs to the PlsY family. Probably interacts with PlsX.

It localises to the cell membrane. The enzyme catalyses an acyl phosphate + sn-glycerol 3-phosphate = a 1-acyl-sn-glycero-3-phosphate + phosphate. It participates in lipid metabolism; phospholipid metabolism. Catalyzes the transfer of an acyl group from acyl-phosphate (acyl-PO(4)) to glycerol-3-phosphate (G3P) to form lysophosphatidic acid (LPA). This enzyme utilizes acyl-phosphate as fatty acyl donor, but not acyl-CoA or acyl-ACP. This Mycoplasmopsis agalactiae (strain NCTC 10123 / CIP 59.7 / PG2) (Mycoplasma agalactiae) protein is Glycerol-3-phosphate acyltransferase.